The following is a 155-amino-acid chain: Putative pre-16S rRNA nuclease (155 aa).

Belongs to the YqgF nuclease family.

The protein localises to the cytoplasm. In terms of biological role, could be a nuclease involved in processing of the 5'-end of pre-16S rRNA. This Novosphingobium aromaticivorans (strain ATCC 700278 / DSM 12444 / CCUG 56034 / CIP 105152 / NBRC 16084 / F199) protein is Putative pre-16S rRNA nuclease.